The sequence spans 144 residues: Large ribosomal subunit protein uL15 (144 aa).

The disordered stretch occupies residues 1 to 52 (MRLNTLSPAAGSKPSKKRVGRGIGSGLGKTGGRGHKGQKSRSGGKVRAGFEG). Residues 21–31 (RGIGSGLGKTG) show a composition bias toward gly residues. The segment covering 32–44 (GRGHKGQKSRSGG) has biased composition (basic residues).

It belongs to the universal ribosomal protein uL15 family. In terms of assembly, part of the 50S ribosomal subunit.

Binds to the 23S rRNA. This is Large ribosomal subunit protein uL15 from Aliivibrio fischeri (strain ATCC 700601 / ES114) (Vibrio fischeri).